The following is a 325-amino-acid chain: Ribosomal RNA small subunit methyltransferase H (325 aa).

S-adenosyl-L-methionine is bound by residues 41 to 43 (GGH), Asp-60, Tyr-87, Asp-108, and Gln-115. A disordered region spans residues 295-325 (DDDEKAANPRAAPVRLRAAERTRASEDRRGS). Positions 311 to 325 (RAAERTRASEDRRGS) are enriched in basic and acidic residues.

Belongs to the methyltransferase superfamily. RsmH family.

It localises to the cytoplasm. It carries out the reaction cytidine(1402) in 16S rRNA + S-adenosyl-L-methionine = N(4)-methylcytidine(1402) in 16S rRNA + S-adenosyl-L-homocysteine + H(+). Functionally, specifically methylates the N4 position of cytidine in position 1402 (C1402) of 16S rRNA. The polypeptide is Ribosomal RNA small subunit methyltransferase H (Leifsonia xyli subsp. xyli (strain CTCB07)).